Consider the following 472-residue polypeptide: 6-phosphogluconate dehydrogenase, decarboxylating (472 aa).

NADP(+) is bound by residues 10 to 15 (GMAVMG), 33 to 35 (NRT), 74 to 76 (VQA), and Asn-102. Residues Asn-102 and 128–130 (SGG) each bind substrate. Lys-184 serves as the catalytic Proton acceptor. Residue 187–188 (HN) participates in substrate binding. The Proton donor role is filled by Glu-191. Tyr-192, Lys-262, Arg-289, Arg-447, and His-453 together coordinate substrate.

It belongs to the 6-phosphogluconate dehydrogenase family. As to quaternary structure, homodimer.

The enzyme catalyses 6-phospho-D-gluconate + NADP(+) = D-ribulose 5-phosphate + CO2 + NADPH. It participates in carbohydrate degradation; pentose phosphate pathway; D-ribulose 5-phosphate from D-glucose 6-phosphate (oxidative stage): step 3/3. Functionally, catalyzes the oxidative decarboxylation of 6-phosphogluconate to ribulose 5-phosphate and CO(2), with concomitant reduction of NADP to NADPH. This Lactococcus lactis subsp. lactis (strain IL1403) (Streptococcus lactis) protein is 6-phosphogluconate dehydrogenase, decarboxylating (gnd).